We begin with the raw amino-acid sequence, 66 residues long: Large ribosomal subunit protein bL33c (66 aa).

It belongs to the bacterial ribosomal protein bL33 family.

It localises to the plastid. It is found in the chloroplast. The protein is Large ribosomal subunit protein bL33c of Aethionema grandiflorum (Persian stone-cress).